The primary structure comprises 108 residues: Urease subunit beta (108 aa).

It belongs to the urease beta subunit family. In terms of assembly, heterotrimer of UreA (gamma), UreB (beta) and UreC (alpha) subunits. Three heterotrimers associate to form the active enzyme.

It localises to the cytoplasm. The catalysed reaction is urea + 2 H2O + H(+) = hydrogencarbonate + 2 NH4(+). Its pathway is nitrogen metabolism; urea degradation; CO(2) and NH(3) from urea (urease route): step 1/1. The polypeptide is Urease subunit beta (Nocardia farcinica (strain IFM 10152)).